We begin with the raw amino-acid sequence, 155 residues long: Protein archease-like (155 aa).

Ca(2+) contacts are provided by Asp26, Asp154, and Ile155.

This sequence belongs to the archease family.

Component of the tRNA-splicing ligase complex required to facilitate the enzymatic turnover of catalytic subunit RtcB. This chain is Protein archease-like, found in Caenorhabditis briggsae.